Reading from the N-terminus, the 545-residue chain is RNA-directed RNA polymerase beta chain (545 aa).

One can recognise a RdRp catalytic domain in the interval 243-373 (RLAQQGSRDG…PNLRKTFTSG (131 aa)).

Part of the viral RNA-dependent RNA polymerase complex, the other subunits are probably the host ribosomal protein S1, EF-Tu and EF-Ts.

The catalysed reaction is RNA(n) + a ribonucleoside 5'-triphosphate = RNA(n+1) + diphosphate. Functionally, this is the catalytic subunit of the viral RNA-dependent RNA polymerase complex. This complex is involved in viral RNA replication that produces (+)-stranded genomes via a complementary, (-)-stranded intermediate. The chain is RNA-directed RNA polymerase beta chain from Enterobacteria phage fr (Bacteriophage fr).